A 312-amino-acid polypeptide reads, in one-letter code: Apolipoprotein E (312 aa).

A signal peptide spans 1–18; that stretch reads MKALWALLLVPLLTGCLA. Repeat copies occupy residues 72-93, 94-115, 116-137, 138-159, 160-181, 182-203, 204-225, and 226-247. Positions 72-247 are 8 X 22 AA approximate tandem repeats; that stretch reads VLMEDTMTEV…RLEEVREQME (176 aa). The residue at position 135 (Met-135) is a Methionine sulfoxide. Ser-139 carries the phosphoserine modification. Residues 150 to 160 are LDL and other lipoprotein receptors binding; that stretch reads HLRKMRKRLMR. The LDL receptor binding stretch occupies residues 150 to 160; it reads HLRKMRKRLMR. 154–157 provides a ligand contact to heparin; it reads MRKR. The lipid-binding and lipoprotein association stretch occupies residues 202 to 282; the sequence is TANLGAGAAQ…GWFEPLVEDM (81 aa). Heparin is bound at residue 221–228; it reads SDRIRGRL. The interval 258-312 is homooligomerization; that stretch reads QQIRLQAEIFQARIKGWFEPLVEDMQRQWANLMEKIQASVATNSIASTTVPLENQ. Residues 270 to 282 are specificity for association with VLDL; the sequence is RIKGWFEPLVEDM.

The protein belongs to the apolipoprotein A1/A4/E family. Homotetramer. May interact with ABCA1; functionally associated with ABCA1 in the biogenesis of HDLs. May interact with APP/A4 amyloid-beta peptide; the interaction is extremely stable in vitro but its physiological significance is unclear. May interact with MAPT. May interact with MAP2. In the cerebrospinal fluid, interacts with secreted SORL1. Interacts with PMEL; this allows the loading of PMEL luminal fragment on ILVs to induce fibril nucleation. APOE exists as multiple glycosylated and sialylated glycoforms within cells and in plasma. The extent of glycosylation and sialylation are tissue and context specific. Post-translationally, glycated in plasma VLDL. In terms of processing, phosphorylated by FAM20C in the extracellular medium.

Its subcellular location is the secreted. It is found in the extracellular space. The protein localises to the extracellular matrix. It localises to the extracellular vesicle. The protein resides in the endosome. Its subcellular location is the multivesicular body. APOE is an apolipoprotein, a protein associating with lipid particles, that mainly functions in lipoprotein-mediated lipid transport between organs via the plasma and interstitial fluids. APOE is a core component of plasma lipoproteins and is involved in their production, conversion and clearance. Apolipoproteins are amphipathic molecules that interact both with lipids of the lipoprotein particle core and the aqueous environment of the plasma. As such, APOE associates with chylomicrons, chylomicron remnants, very low density lipoproteins (VLDL) and intermediate density lipoproteins (IDL) but shows a preferential binding to high-density lipoproteins (HDL). It also binds a wide range of cellular receptors including the LDL receptor/LDLR and the very low-density lipoprotein receptor/VLDLR that mediate the cellular uptake of the APOE-containing lipoprotein particles. Finally, APOE also has a heparin-binding activity and binds heparan-sulfate proteoglycans on the surface of cells, a property that supports the capture and the receptor-mediated uptake of APOE-containing lipoproteins by cells. The chain is Apolipoprotein E (Apoe) from Rattus norvegicus (Rat).